Consider the following 316-residue polypeptide: 4-hydroxy-3-methylbut-2-enyl diphosphate reductase (316 aa).

Cys12 contributes to the [4Fe-4S] cluster binding site. (2E)-4-hydroxy-3-methylbut-2-enyl diphosphate is bound by residues His41 and His74. Dimethylallyl diphosphate-binding residues include His41 and His74. Residues His41 and His74 each coordinate isopentenyl diphosphate. Cys96 contributes to the [4Fe-4S] cluster binding site. His124 contributes to the (2E)-4-hydroxy-3-methylbut-2-enyl diphosphate binding site. His124 serves as a coordination point for dimethylallyl diphosphate. Residue His124 coordinates isopentenyl diphosphate. Catalysis depends on Glu126, which acts as the Proton donor. Position 167 (Thr167) interacts with (2E)-4-hydroxy-3-methylbut-2-enyl diphosphate. Position 197 (Cys197) interacts with [4Fe-4S] cluster. Positions 225, 226, 227, and 269 each coordinate (2E)-4-hydroxy-3-methylbut-2-enyl diphosphate. Dimethylallyl diphosphate contacts are provided by Ser225, Ser226, Asn227, and Ser269. Positions 225, 226, 227, and 269 each coordinate isopentenyl diphosphate.

The protein belongs to the IspH family. As to quaternary structure, homodimer. Requires [4Fe-4S] cluster as cofactor.

The enzyme catalyses isopentenyl diphosphate + 2 oxidized [2Fe-2S]-[ferredoxin] + H2O = (2E)-4-hydroxy-3-methylbut-2-enyl diphosphate + 2 reduced [2Fe-2S]-[ferredoxin] + 2 H(+). It catalyses the reaction dimethylallyl diphosphate + 2 oxidized [2Fe-2S]-[ferredoxin] + H2O = (2E)-4-hydroxy-3-methylbut-2-enyl diphosphate + 2 reduced [2Fe-2S]-[ferredoxin] + 2 H(+). It functions in the pathway isoprenoid biosynthesis; dimethylallyl diphosphate biosynthesis; dimethylallyl diphosphate from (2E)-4-hydroxy-3-methylbutenyl diphosphate: step 1/1. Its pathway is isoprenoid biosynthesis; isopentenyl diphosphate biosynthesis via DXP pathway; isopentenyl diphosphate from 1-deoxy-D-xylulose 5-phosphate: step 6/6. In terms of biological role, catalyzes the conversion of 1-hydroxy-2-methyl-2-(E)-butenyl 4-diphosphate (HMBPP) into a mixture of isopentenyl diphosphate (IPP) and dimethylallyl diphosphate (DMAPP). Acts in the terminal step of the DOXP/MEP pathway for isoprenoid precursor biosynthesis. The polypeptide is 4-hydroxy-3-methylbut-2-enyl diphosphate reductase (Cronobacter sakazakii (strain ATCC BAA-894) (Enterobacter sakazakii)).